A 400-amino-acid polypeptide reads, in one-letter code: MASDSGGPGVLSASERDRQYCELCGKMENLLRCGRCRSSFYCCKEHQRQDWKKHKLVCQGGEAPRAQPAPAQPRVAPPPGGAPGAARAGGAARRGDSAAASRVPGPEDAAQARSGPGPAEPGSEDPPLSRSPGPERASLCPAGGGPGEALSPGGGLRPNGQTKPLPALKLALEYIVPCMNKHGICVVDDFLGRETGQQIGDEVRALHDTGKFTDGQLVSQKSDSSKDIRGDQITWIEGKEPGCETIGLLMSSMDDLIRHCSGKLGNYRINGRTKAMVACYPGNGTGYVRHVDNPNGDGRCVTCIYYLNKDWDAKVSGGILRIFPEGKAQFADIEPKFDRLLFFWSDRRNPHEVQPAYATRYAITVWYFDADERARAKVKYLTGEKGVRVELKPNSVSKDV.

A2 is subject to N-acetylalanine. The tract at residues 6–20 (GGPGVLSASERDRQY) is required for nuclear export. S12 carries the phosphoserine modification. C21, C24, C33, C36, C42, H46, H54, and C58 together coordinate Zn(2+). The MYND-type; atypical zinc finger occupies 21–58 (CELCGKMENLLRCGRCRSSFYCCKEHQRQDWKKHKLVC). Positions 62 to 74 (EAPRAQPAPAQPR) are enriched in low complexity. A disordered region spans residues 62-161 (EAPRAQPAPA…PGGGLRPNGQ (100 aa)). At S114 the chain carries Phosphoserine. Residues 142–157 (AGGGPGEALSPGGGLR) are compositionally biased toward gly residues. Residues C178 and C185 each carry the S-nitrosocysteine modification. Positions 218 to 228 (VSQKSDSSKDI) are beta(2)beta(3) 'finger-like' loop. The region spanning 271–369 (GRTKAMVACY…RYAITVWYFD (99 aa)) is the Fe2OG dioxygenase domain. C279 is modified (S-nitrosocysteine). 2 residues coordinate Fe cation: H290 and D292. An S-nitrosocysteine mark is found at C300 and C303. Residue H351 participates in Fe cation binding. Position 360 (R360) interacts with 2-oxoglutarate.

In terms of assembly, monomer. Interacts with ING4; the interaction inhibits the hydroxylation of HIF alpha proteins. Interacts with PTGES3 (via PXLE motif); thereby recruiting EGLN1 to the HSP90 pathway to facilitate HIF alpha proteins hydroxylation. Interacts with LIMD1. Found in a complex composed of LIMD1, VHL, EGLN1/PHD2, ELOB and CUL2. Interacts with EPAS1. Interacts with CBFA2T3 and HIF1A. Requires Fe(2+) as cofactor. L-ascorbate serves as cofactor. In terms of processing, S-nitrosylation inhibits the enzyme activity up to 60% under aerobic conditions. Chelation of Fe(2+) has no effect on the S-nitrosylation. It is uncertain whether nitrosylation occurs on Cys-300 or Cys-303. In terms of tissue distribution, expressed in heart, brain liver, skeletal muscle and kidney. Low levels were detected in the lung. Constitutively expressed during differentiation of C2C12 skeletal myocytes.

The protein resides in the cytoplasm. The protein localises to the nucleus. The catalysed reaction is L-prolyl-[hypoxia-inducible factor alpha subunit] + 2-oxoglutarate + O2 = trans-4-hydroxy-L-prolyl-[hypoxia-inducible factor alpha subunit] + succinate + CO2. In terms of biological role, cellular oxygen sensor that catalyzes, under normoxic conditions, the post-translational formation of 4-hydroxyproline in hypoxia-inducible factor (HIF) alpha proteins. Hydroxylates a specific proline found in each of the oxygen-dependent degradation (ODD) domains (N-terminal, NODD, and C-terminal, CODD) of HIF1A. Also hydroxylates HIF2A. Has a preference for the CODD site for both HIF1A and HIF1B. Hydroxylated HIFs are then targeted for proteasomal degradation via the von Hippel-Lindau ubiquitination complex. Under hypoxic conditions, the hydroxylation reaction is attenuated allowing HIFs to escape degradation resulting in their translocation to the nucleus, heterodimerization with HIF1B, and increased expression of hypoxy-inducible genes. EGLN1 is the most important isozyme under normoxia and, through regulating the stability of HIF1, involved in various hypoxia-influenced processes such as angiogenesis in retinal and cardiac functionality. Target proteins are preferentially recognized via a LXXLAP motif. This is Egl nine homolog 1 (Egln1) from Mus musculus (Mouse).